The sequence spans 122 residues: MIQERTILNVADNSGARKIRCFRVTKGLKRRYASIGDVIHASVQDALPHANVKKGDVVKAVVVRTVKEIRRADGTYIKFDDNATVIINDEGEPKGTRIFGPVAKELRENNYLKIISLAPEVI.

This sequence belongs to the universal ribosomal protein uL14 family. Part of the 50S ribosomal subunit. Forms a cluster with proteins L3 and L19. In the 70S ribosome, L14 and L19 interact and together make contacts with the 16S rRNA in bridges B5 and B8.

In terms of biological role, binds to 23S rRNA. Forms part of two intersubunit bridges in the 70S ribosome. The chain is Large ribosomal subunit protein uL14 from Endomicrobium trichonymphae.